Consider the following 100-residue polypeptide: Large ribosomal subunit protein uL23 (100 aa).

This sequence belongs to the universal ribosomal protein uL23 family. In terms of assembly, part of the 50S ribosomal subunit. Contacts protein L29, and trigger factor when it is bound to the ribosome.

Functionally, one of the early assembly proteins it binds 23S rRNA. One of the proteins that surrounds the polypeptide exit tunnel on the outside of the ribosome. Forms the main docking site for trigger factor binding to the ribosome. This chain is Large ribosomal subunit protein uL23, found in Edwardsiella ictaluri (strain 93-146).